A 257-amino-acid chain; its full sequence is tRNA pseudouridine synthase A (257 aa).

The Nucleophile role is filled by Asp-52. Residue Tyr-111 participates in substrate binding.

This sequence belongs to the tRNA pseudouridine synthase TruA family. Homodimer.

The enzyme catalyses uridine(38/39/40) in tRNA = pseudouridine(38/39/40) in tRNA. Formation of pseudouridine at positions 38, 39 and 40 in the anticodon stem and loop of transfer RNAs. The sequence is that of tRNA pseudouridine synthase A from Dinoroseobacter shibae (strain DSM 16493 / NCIMB 14021 / DFL 12).